The following is a 1106-amino-acid chain: Carbamoyl phosphate synthase large chain (1106 aa).

The carboxyphosphate synthetic domain stretch occupies residues 1–402 (MPKREDLKSV…ALQKALRSLE (402 aa)). ATP contacts are provided by Arg129, Arg169, Gly175, Gly176, Glu208, Ile210, Glu215, Gly241, Val242, His243, Gln285, and Glu299. The region spanning 133–328 (KGVVERCGAE…IAKIATKLSL (196 aa)) is the ATP-grasp 1 domain. The Mg(2+) site is built by Gln285, Glu299, and Asn301. Residues Gln285, Glu299, and Asn301 each coordinate Mn(2+). Residues 403 to 546 (QKGSQLDFGS…YHYSSYDQED (144 aa)) form an oligomerization domain region. The carbamoyl phosphate synthetic domain stretch occupies residues 547-956 (EIALHEKPSV…AFAKSQAAAN (410 aa)). In terms of domain architecture, ATP-grasp 2 spans 677 to 868 (ARVLDIAGLI…LAKAAALIGT (192 aa)). ATP is bound by residues Arg713, Arg752, Leu754, Glu759, Gly784, Ile785, His786, Ser787, Gln827, and Glu839. Mg(2+) is bound by residues Gln827, Glu839, and Asn841. 3 residues coordinate Mn(2+): Gln827, Glu839, and Asn841. An MGS-like domain is found at 957–1106 (NALPTEGKVF…EALLEAAANV (150 aa)). The tract at residues 957 to 1106 (NALPTEGKVF…EALLEAAANV (150 aa)) is allosteric domain.

This sequence belongs to the CarB family. In terms of assembly, composed of two chains; the small (or glutamine) chain promotes the hydrolysis of glutamine to ammonia, which is used by the large (or ammonia) chain to synthesize carbamoyl phosphate. Tetramer of heterodimers (alpha,beta)4. The cofactor is Mg(2+). It depends on Mn(2+) as a cofactor.

It carries out the reaction hydrogencarbonate + L-glutamine + 2 ATP + H2O = carbamoyl phosphate + L-glutamate + 2 ADP + phosphate + 2 H(+). The catalysed reaction is hydrogencarbonate + NH4(+) + 2 ATP = carbamoyl phosphate + 2 ADP + phosphate + 2 H(+). It participates in amino-acid biosynthesis; L-arginine biosynthesis; carbamoyl phosphate from bicarbonate: step 1/1. The protein operates within pyrimidine metabolism; UMP biosynthesis via de novo pathway; (S)-dihydroorotate from bicarbonate: step 1/3. Functionally, large subunit of the glutamine-dependent carbamoyl phosphate synthetase (CPSase). CPSase catalyzes the formation of carbamoyl phosphate from the ammonia moiety of glutamine, carbonate, and phosphate donated by ATP, constituting the first step of 2 biosynthetic pathways, one leading to arginine and/or urea and the other to pyrimidine nucleotides. The large subunit (synthetase) binds the substrates ammonia (free or transferred from glutamine from the small subunit), hydrogencarbonate and ATP and carries out an ATP-coupled ligase reaction, activating hydrogencarbonate by forming carboxy phosphate which reacts with ammonia to form carbamoyl phosphate. The chain is Carbamoyl phosphate synthase large chain from Renibacterium salmoninarum (strain ATCC 33209 / DSM 20767 / JCM 11484 / NBRC 15589 / NCIMB 2235).